The primary structure comprises 102 residues: Large ribosomal subunit protein bL21 (102 aa).

The protein belongs to the bacterial ribosomal protein bL21 family. In terms of assembly, part of the 50S ribosomal subunit. Contacts protein L20.

Its function is as follows. This protein binds to 23S rRNA in the presence of protein L20. The chain is Large ribosomal subunit protein bL21 from Pediococcus pentosaceus (strain ATCC 25745 / CCUG 21536 / LMG 10740 / 183-1w).